Here is a 506-residue protein sequence, read N- to C-terminus: ATP synthase subunit alpha, chloroplastic (506 aa).

ATP is bound at residue 170 to 177; it reads GDRQTGKT.

It belongs to the ATPase alpha/beta chains family. In terms of assembly, F-type ATPases have 2 components, CF(1) - the catalytic core - and CF(0) - the membrane proton channel. CF(1) has five subunits: alpha(3), beta(3), gamma(1), delta(1), epsilon(1). CF(0) has four main subunits: a, b, b' and c.

It localises to the plastid. The protein resides in the chloroplast thylakoid membrane. The catalysed reaction is ATP + H2O + 4 H(+)(in) = ADP + phosphate + 5 H(+)(out). Its function is as follows. Produces ATP from ADP in the presence of a proton gradient across the membrane. The alpha chain is a regulatory subunit. This is ATP synthase subunit alpha, chloroplastic from Chlorella vulgaris (Green alga).